Reading from the N-terminus, the 343-residue chain is Probable dual-specificity RNA methyltransferase RlmN (343 aa).

The Proton acceptor role is filled by Glu-92. The Radical SAM core domain occupies 98-328 (YHHGLTACIS…TTVRREMGAD (231 aa)). An intrachain disulfide couples Cys-105 to Cys-333. 3 residues coordinate [4Fe-4S] cluster: Cys-112, Cys-116, and Cys-119. Residues 159 to 160 (GE), Ser-191, 214 to 216 (SLH), and Asn-290 each bind S-adenosyl-L-methionine. Cys-333 functions as the S-methylcysteine intermediate in the catalytic mechanism.

This sequence belongs to the radical SAM superfamily. RlmN family. Requires [4Fe-4S] cluster as cofactor.

The protein localises to the cytoplasm. The catalysed reaction is adenosine(2503) in 23S rRNA + 2 reduced [2Fe-2S]-[ferredoxin] + 2 S-adenosyl-L-methionine = 2-methyladenosine(2503) in 23S rRNA + 5'-deoxyadenosine + L-methionine + 2 oxidized [2Fe-2S]-[ferredoxin] + S-adenosyl-L-homocysteine. The enzyme catalyses adenosine(37) in tRNA + 2 reduced [2Fe-2S]-[ferredoxin] + 2 S-adenosyl-L-methionine = 2-methyladenosine(37) in tRNA + 5'-deoxyadenosine + L-methionine + 2 oxidized [2Fe-2S]-[ferredoxin] + S-adenosyl-L-homocysteine. Its function is as follows. Specifically methylates position 2 of adenine 2503 in 23S rRNA and position 2 of adenine 37 in tRNAs. In Alkaliphilus oremlandii (strain OhILAs) (Clostridium oremlandii (strain OhILAs)), this protein is Probable dual-specificity RNA methyltransferase RlmN.